Consider the following 510-residue polypeptide: MIWHVQNENFILDSTRIFMKAFHLLLFHGSFIFPECILIFGLILLLMIDSTSDQKDRPWFYFISSTSLIISITALLFRWREEPIISFSGNFQTNNFNEIFQFLILLCSTLCIPLSVEYIECTEMAITEFLLFVLTATLGGMFLCGANDLITIFVAPECFSLCSYLLSGYTKRDVRSNEATMKYLLMGGASSSILVHGFSWLYGSSGGEIELQEIVNGLINTQMYNSPGISIALISITVGIGFKLSPAPFHQWTPDVYEGSPTPVVAFLSVTSKVAASASATRIFDIPFYFSSNEWHLLLEILAILSMILGNLIAITQTSMKRMLAYSSIGQIGYVIIGIIVGDSNDGYASMITYMLFYISMNLGTFACIVLFGLRTGTDNIRDYAGLYTKDPFLALSSALCLLSLGGLPPLAGFFGKLHLFWCGWQAGLYFLVSIGLLTSVVSIYYYLKIIKLLMTGRNQEITPYVRNYRRSPLRSNNSIELSMTVCVIASTIPGISMNPILAIAQDTLF.

The next 12 helical transmembrane spans lie at 24–44, 59–79, 99–119, 124–144, 149–169, 183–203, 229–249, 295–315, 323–343, 354–374, 395–415, and 418–438; these read LLLF…GLIL, WFYF…LFRW, IFQF…VEYI, MAIT…MFLC, LITI…LSGY, YLLM…WLYG, ISIA…PAPF, WHLL…LIAI, MLAY…IVGD, YMLF…LFGL, ALSS…AGFF, and LHLF…IGLL.

It belongs to the complex I subunit 2 family. In terms of assembly, NDH is composed of at least 16 different subunits, 5 of which are encoded in the nucleus.

Its subcellular location is the plastid. It is found in the chloroplast thylakoid membrane. The enzyme catalyses a plastoquinone + NADH + (n+1) H(+)(in) = a plastoquinol + NAD(+) + n H(+)(out). It catalyses the reaction a plastoquinone + NADPH + (n+1) H(+)(in) = a plastoquinol + NADP(+) + n H(+)(out). Functionally, NDH shuttles electrons from NAD(P)H:plastoquinone, via FMN and iron-sulfur (Fe-S) centers, to quinones in the photosynthetic chain and possibly in a chloroplast respiratory chain. The immediate electron acceptor for the enzyme in this species is believed to be plastoquinone. Couples the redox reaction to proton translocation, and thus conserves the redox energy in a proton gradient. The protein is NAD(P)H-quinone oxidoreductase subunit 2, chloroplastic of Ensete ventricosum (Abyssinian banana).